A 153-amino-acid chain; its full sequence is SsrA-binding protein (153 aa).

The interval 129-153 (KREDMKKKDQSREMAQALREKSKSH) is disordered.

The protein belongs to the SmpB family.

The protein localises to the cytoplasm. In terms of biological role, required for rescue of stalled ribosomes mediated by trans-translation. Binds to transfer-messenger RNA (tmRNA), required for stable association of tmRNA with ribosomes. tmRNA and SmpB together mimic tRNA shape, replacing the anticodon stem-loop with SmpB. tmRNA is encoded by the ssrA gene; the 2 termini fold to resemble tRNA(Ala) and it encodes a 'tag peptide', a short internal open reading frame. During trans-translation Ala-aminoacylated tmRNA acts like a tRNA, entering the A-site of stalled ribosomes, displacing the stalled mRNA. The ribosome then switches to translate the ORF on the tmRNA; the nascent peptide is terminated with the 'tag peptide' encoded by the tmRNA and targeted for degradation. The ribosome is freed to recommence translation, which seems to be the essential function of trans-translation. The chain is SsrA-binding protein from Geobacter sulfurreducens (strain ATCC 51573 / DSM 12127 / PCA).